Consider the following 463-residue polypeptide: L-seryl-tRNA(Sec) selenium transferase (463 aa).

The residue at position 295 (Lys-295) is an N6-(pyridoxal phosphate)lysine.

This sequence belongs to the SelA family. As to quaternary structure, homodecamer; pentamer of dimers. Binds only one seryl-tRNA(Sec) per dimer. Pyridoxal 5'-phosphate serves as cofactor.

It is found in the cytoplasm. It catalyses the reaction L-seryl-tRNA(Sec) + selenophosphate + H(+) = L-selenocysteinyl-tRNA(Sec) + phosphate. The protein operates within aminoacyl-tRNA biosynthesis; selenocysteinyl-tRNA(Sec) biosynthesis; selenocysteinyl-tRNA(Sec) from L-seryl-tRNA(Sec) (bacterial route): step 1/1. In terms of biological role, converts seryl-tRNA(Sec) to selenocysteinyl-tRNA(Sec) required for selenoprotein biosynthesis. This is L-seryl-tRNA(Sec) selenium transferase from Edwardsiella ictaluri (strain 93-146).